The following is a 130-amino-acid chain: Protein ApaG (130 aa).

The ApaG domain occupies Arg3 to Arg127.

The polypeptide is Protein ApaG (Rhizobium leguminosarum bv. trifolii (strain WSM2304)).